The primary structure comprises 274 residues: Large ribosomal subunit protein uL2 (274 aa).

The segment at 224–274 (VAMNPVDHPHGGGEGRTSGGRHPVTPWGIPTKGYKTRRNKRSNKLIVQKRK) is disordered. The span at 257 to 274 (YKTRRNKRSNKLIVQKRK) shows a compositional bias: basic residues.

The protein belongs to the universal ribosomal protein uL2 family. In terms of assembly, part of the 50S ribosomal subunit. Forms a bridge to the 30S subunit in the 70S ribosome.

Its function is as follows. One of the primary rRNA binding proteins. Required for association of the 30S and 50S subunits to form the 70S ribosome, for tRNA binding and peptide bond formation. It has been suggested to have peptidyltransferase activity; this is somewhat controversial. Makes several contacts with the 16S rRNA in the 70S ribosome. The chain is Large ribosomal subunit protein uL2 from Francisella tularensis subsp. tularensis (strain FSC 198).